The chain runs to 397 residues: Chorismate synthase (397 aa).

NADP(+) is bound by residues Arg-40 and Arg-46. FMN is bound by residues 129–131 (RSS), 257–258 (QA), Gly-302, 317–321 (KPISS), and Arg-343.

The protein belongs to the chorismate synthase family. In terms of assembly, homotetramer. The cofactor is FMNH2.

It catalyses the reaction 5-O-(1-carboxyvinyl)-3-phosphoshikimate = chorismate + phosphate. The protein operates within metabolic intermediate biosynthesis; chorismate biosynthesis; chorismate from D-erythrose 4-phosphate and phosphoenolpyruvate: step 7/7. Catalyzes the anti-1,4-elimination of the C-3 phosphate and the C-6 proR hydrogen from 5-enolpyruvylshikimate-3-phosphate (EPSP) to yield chorismate, which is the branch point compound that serves as the starting substrate for the three terminal pathways of aromatic amino acid biosynthesis. This reaction introduces a second double bond into the aromatic ring system. The sequence is that of Chorismate synthase from Chlorobium phaeovibrioides (strain DSM 265 / 1930) (Prosthecochloris vibrioformis (strain DSM 265)).